A 103-amino-acid polypeptide reads, in one-letter code: Small ribosomal subunit protein uS14c (103 aa).

The protein belongs to the universal ribosomal protein uS14 family. In terms of assembly, part of the 30S ribosomal subunit.

Its subcellular location is the plastid. It is found in the chloroplast. Binds 16S rRNA, required for the assembly of 30S particles. The sequence is that of Small ribosomal subunit protein uS14c from Oryza nivara (Indian wild rice).